Reading from the N-terminus, the 463-residue chain is T-box transcription factor TBX1-A (463 aa).

Disordered regions lie at residues Ser-39–Ala-58 and Gly-75–Asn-104. Positions Gly-75–Ser-96 are enriched in low complexity. A DNA-binding region (T-box) is located at residues Leu-119–Asp-297. Disordered regions lie at residues Arg-320 to Gly-354 and Val-377 to Tyr-409. The span at Asn-323–Gly-332 shows a compositional bias: polar residues. Over residues Ser-333–Ala-347 the composition is skewed to basic and acidic residues. The Nuclear localization signal motif lies at Lys-420–Ile-431.

Binds DNA as a dimer. Interacts with dscr6/ripply3.

The protein resides in the nucleus. Its function is as follows. Probable transcriptional regulator involved in developmental processes. Binds to the palindromic T site 5'-TTCACACCTAGGTGTGAA-3' DNA sequence. Induces pre-placodal ectoderm (PPE) gene expression in regions where RIPPLY3 is absent. Plays a role in the formation of the anteroposterior (AP) axis during embryonic development; required to establish the posterolateral border of the pre-placodal ectoderm (PPE) acting downstream of the retinoic acid receptor (RAR) signaling. This Xenopus laevis (African clawed frog) protein is T-box transcription factor TBX1-A (tbx1-a).